We begin with the raw amino-acid sequence, 354 residues long: tRNA N6-adenosine threonylcarbamoyltransferase (354 aa).

Positions 111 and 115 each coordinate Fe cation. Residues leucine 134–glycine 138, aspartate 167, glycine 180, and asparagine 279 each bind substrate. A Fe cation-binding site is contributed by aspartate 319.

It belongs to the KAE1 / TsaD family. The cofactor is Fe(2+).

The protein resides in the cytoplasm. It catalyses the reaction L-threonylcarbamoyladenylate + adenosine(37) in tRNA = N(6)-L-threonylcarbamoyladenosine(37) in tRNA + AMP + H(+). Required for the formation of a threonylcarbamoyl group on adenosine at position 37 (t(6)A37) in tRNAs that read codons beginning with adenine. Is involved in the transfer of the threonylcarbamoyl moiety of threonylcarbamoyl-AMP (TC-AMP) to the N6 group of A37, together with TsaE and TsaB. TsaD likely plays a direct catalytic role in this reaction. The protein is tRNA N6-adenosine threonylcarbamoyltransferase of Neisseria gonorrhoeae (strain ATCC 700825 / FA 1090).